Consider the following 511-residue polypeptide: GMP synthase [glutamine-hydrolyzing] (511 aa).

The 191-residue stretch at 5 to 195 (AILVLDFGSQ…VFKICQAQIN (191 aa)) folds into the Glutamine amidotransferase type-1 domain. C82 functions as the Nucleophile in the catalytic mechanism. Active-site residues include H169 and E171. One can recognise a GMPS ATP-PPase domain in the interval 196–386 (WSLEGNLETI…LGIKKESLYR (191 aa)). 223–229 (SGGTDSL) provides a ligand contact to ATP.

In terms of assembly, homodimer.

The enzyme catalyses XMP + L-glutamine + ATP + H2O = GMP + L-glutamate + AMP + diphosphate + 2 H(+). Its pathway is purine metabolism; GMP biosynthesis; GMP from XMP (L-Gln route): step 1/1. Catalyzes the synthesis of GMP from XMP. This Borreliella burgdorferi (strain ATCC 35210 / DSM 4680 / CIP 102532 / B31) (Borrelia burgdorferi) protein is GMP synthase [glutamine-hydrolyzing] (guaA).